A 105-amino-acid polypeptide reads, in one-letter code: Nucleoid-associated protein MW0434 (105 aa).

Residues 1–33 are disordered; the sequence is MRGGGNMQQMMKQMQKMQKKMAQEQEKLKEERI. Residues 7-16 show a composition bias toward low complexity; that stretch reads MQQMMKQMQK. Over residues 21 to 33 the composition is skewed to basic and acidic residues; sequence MAQEQEKLKEERI.

It belongs to the YbaB/EbfC family. As to quaternary structure, homodimer.

The protein localises to the cytoplasm. Its subcellular location is the nucleoid. Functionally, binds to DNA and alters its conformation. May be involved in regulation of gene expression, nucleoid organization and DNA protection. The protein is Nucleoid-associated protein MW0434 of Staphylococcus aureus (strain MW2).